The primary structure comprises 197 residues: Peptide deformylase (197 aa).

Fe cation contacts are provided by cysteine 106 and histidine 148. Glutamate 149 is an active-site residue. Residue histidine 152 participates in Fe cation binding.

This sequence belongs to the polypeptide deformylase family. Requires Fe(2+) as cofactor.

It catalyses the reaction N-terminal N-formyl-L-methionyl-[peptide] + H2O = N-terminal L-methionyl-[peptide] + formate. In terms of biological role, removes the formyl group from the N-terminal Met of newly synthesized proteins. Requires at least a dipeptide for an efficient rate of reaction. N-terminal L-methionine is a prerequisite for activity but the enzyme has broad specificity at other positions. In Mycobacterium marinum (strain ATCC BAA-535 / M), this protein is Peptide deformylase.